A 444-amino-acid chain; its full sequence is Methylenetetrahydrofolate--tRNA-(uracil-5-)-methyltransferase TrmFO (444 aa).

An FAD-binding site is contributed by 10 to 15 (GAGLAG).

This sequence belongs to the MnmG family. TrmFO subfamily. The cofactor is FAD.

The protein localises to the cytoplasm. The enzyme catalyses uridine(54) in tRNA + (6R)-5,10-methylene-5,6,7,8-tetrahydrofolate + NADH + H(+) = 5-methyluridine(54) in tRNA + (6S)-5,6,7,8-tetrahydrofolate + NAD(+). It carries out the reaction uridine(54) in tRNA + (6R)-5,10-methylene-5,6,7,8-tetrahydrofolate + NADPH + H(+) = 5-methyluridine(54) in tRNA + (6S)-5,6,7,8-tetrahydrofolate + NADP(+). Catalyzes the folate-dependent formation of 5-methyl-uridine at position 54 (M-5-U54) in all tRNAs. This Streptococcus pneumoniae (strain Taiwan19F-14) protein is Methylenetetrahydrofolate--tRNA-(uracil-5-)-methyltransferase TrmFO.